A 551-amino-acid polypeptide reads, in one-letter code: MKYQELVDVYSALENTTKRLEKTQIISNFLLKLDSTTLEQVGLLILGSIFPAWSDKEIGIGNKLVMQAVGEAVGVTPDKVEDAVRDQGDIGLACISLYAKKSQTTFFSQPLTIDFVFKSLRKLSEKSGARSTKRKIDIILEMLSQASASEAKYLTRTILEELRIGVGEGVVRDAIAQAFNIDKSVVERAMMLTNDLGLIAVVAKEKGEGGLKELNLTPGTPVKPMLAQLAPPIPEIINEMGVAICETKYDGIRLQVHRHSDEIKIFTRRLENITHALPEIVDLFNEYLPHEDYIVEGEVIATRDGNPLSFQNILHRVRRKHNIDEAMEQVPLKVFLFDLLYYIVPMIDEPLLKRRKKLEEIVNTTPDEINLSNMVYGTPDTIKEVEDLFELSIAQHHEGIMIKDAGEPYIPGLRGKKMLKYKAEPETLDMVVVGGTYGIGKRGDFVGSYLVSLRDEDNNLKTVAYVATGLDDATLEYLTKKMKEYELSTKGREIVVEPKIVLEVAFSEIVESPEYETGYSLRFPVVKNIRKDKGVDDIDTVERLISMYETQ.

Residue Glu246 coordinates ATP. The N6-AMP-lysine intermediate role is filled by Lys248. ATP-binding residues include Arg253, Arg268, Glu298, Phe337, Arg414, and Lys420.

It belongs to the ATP-dependent DNA ligase family. Mg(2+) serves as cofactor.

It carries out the reaction ATP + (deoxyribonucleotide)n-3'-hydroxyl + 5'-phospho-(deoxyribonucleotide)m = (deoxyribonucleotide)n+m + AMP + diphosphate.. In terms of biological role, DNA ligase that seals nicks in double-stranded DNA during DNA replication, DNA recombination and DNA repair. The protein is DNA ligase of Methanobrevibacter smithii (strain ATCC 35061 / DSM 861 / OCM 144 / PS).